We begin with the raw amino-acid sequence, 1579 residues long: DNA-directed RNA polymerase subunit beta' (1579 aa).

Zn(2+) is bound by residues Cys65, Cys67, Cys80, and Cys83. Mg(2+)-binding residues include Asp601, Asp603, and Asp605. Residues Cys938, Cys1012, Cys1019, and Cys1022 each contribute to the Zn(2+) site.

It belongs to the RNA polymerase beta' chain family. As to quaternary structure, the RNAP catalytic core consists of 2 alpha, 1 beta, 1 beta' and 1 omega subunit. When a sigma factor is associated with the core the holoenzyme is formed, which can initiate transcription. Mg(2+) serves as cofactor. The cofactor is Zn(2+).

It catalyses the reaction RNA(n) + a ribonucleoside 5'-triphosphate = RNA(n+1) + diphosphate. Functionally, DNA-dependent RNA polymerase catalyzes the transcription of DNA into RNA using the four ribonucleoside triphosphates as substrates. This chain is DNA-directed RNA polymerase subunit beta', found in Sulfurihydrogenibium sp. (strain YO3AOP1).